A 388-amino-acid polypeptide reads, in one-letter code: Succinate--CoA ligase [ADP-forming] subunit beta (388 aa).

ATP is bound by residues K46, 53-55 (GRG), E99, C102, and E107. The Mg(2+) site is built by N199 and D213. Residues N264 and 321–323 (GIV) each bind substrate.

Belongs to the succinate/malate CoA ligase beta subunit family. In terms of assembly, heterotetramer of two alpha and two beta subunits. Mg(2+) serves as cofactor.

The catalysed reaction is succinate + ATP + CoA = succinyl-CoA + ADP + phosphate. It carries out the reaction GTP + succinate + CoA = succinyl-CoA + GDP + phosphate. It functions in the pathway carbohydrate metabolism; tricarboxylic acid cycle; succinate from succinyl-CoA (ligase route): step 1/1. Succinyl-CoA synthetase functions in the citric acid cycle (TCA), coupling the hydrolysis of succinyl-CoA to the synthesis of either ATP or GTP and thus represents the only step of substrate-level phosphorylation in the TCA. The beta subunit provides nucleotide specificity of the enzyme and binds the substrate succinate, while the binding sites for coenzyme A and phosphate are found in the alpha subunit. This chain is Succinate--CoA ligase [ADP-forming] subunit beta, found in Actinobacillus pleuropneumoniae serotype 7 (strain AP76).